We begin with the raw amino-acid sequence, 321 residues long: MSKPIVMERGVKYRDADKMALIPVKNVATEREALLRKPEWMKIKLPADSTRIQGIKAAMRKNGLHSVCEEASCPNLAECFNHGTATFMILGAICTRRCPFCDVAHGRPVAPDANEPQKLAQTIADMALRYVVITSVDRDDLRDGGAQHFADCITAIREKSPSIKIETLVPDFRGRMDRALEILTATPPDVFNHNLENVPRLYRQVRPGADYNWSLKLLERFKEAHPEIPTKSGLMVGLGETNAEIIEVMRDLRAHGVTMLTLGQYLQPSRHHLPVQRYVSPDEFEEMKAEAMAMGFTHAACGPFVRSSYHADLQAKGEEVK.

Cys-68, Cys-73, Cys-79, Cys-94, Cys-98, Cys-101, and Ser-308 together coordinate [4Fe-4S] cluster. Residues 80–297 (FNHGTATFMI…KAEAMAMGFT (218 aa)) enclose the Radical SAM core domain.

It belongs to the radical SAM superfamily. Lipoyl synthase family. [4Fe-4S] cluster is required as a cofactor.

It is found in the cytoplasm. It carries out the reaction [[Fe-S] cluster scaffold protein carrying a second [4Fe-4S](2+) cluster] + N(6)-octanoyl-L-lysyl-[protein] + 2 oxidized [2Fe-2S]-[ferredoxin] + 2 S-adenosyl-L-methionine + 4 H(+) = [[Fe-S] cluster scaffold protein] + N(6)-[(R)-dihydrolipoyl]-L-lysyl-[protein] + 4 Fe(3+) + 2 hydrogen sulfide + 2 5'-deoxyadenosine + 2 L-methionine + 2 reduced [2Fe-2S]-[ferredoxin]. The protein operates within protein modification; protein lipoylation via endogenous pathway; protein N(6)-(lipoyl)lysine from octanoyl-[acyl-carrier-protein]: step 2/2. Functionally, catalyzes the radical-mediated insertion of two sulfur atoms into the C-6 and C-8 positions of the octanoyl moiety bound to the lipoyl domains of lipoate-dependent enzymes, thereby converting the octanoylated domains into lipoylated derivatives. This chain is Lipoyl synthase, found in Cronobacter sakazakii (strain ATCC BAA-894) (Enterobacter sakazakii).